Reading from the N-terminus, the 126-residue chain is MKFPMNNKKMTTKKRGQYGELLAADYLTAHGLNIVAKNVYSRYGEIDLIAQDDRVLVFVEVRLRRAQALVSAAESITPEKLRRCYQSAQDYLQKNYAVPPDCRFDAVLITQYQTHHEIEWLKNVIF.

It belongs to the UPF0102 family.

This is UPF0102 protein DNO_0639 from Dichelobacter nodosus (strain VCS1703A).